Here is a 293-residue protein sequence, read N- to C-terminus: Acetyl-coenzyme A carboxylase carboxyl transferase subunit beta (293 aa).

Positions 29–293 constitute a CoA carboxyltransferase N-terminal domain; that stretch reads LWVKCSECSQ…GVNELVEANI (265 aa). Residues C33, C36, C52, and C55 each coordinate Zn(2+). A C4-type zinc finger spans residues 33–55; sequence CSECSQVAYRKDLISNFNVCSNC.

Belongs to the AccD/PCCB family. In terms of assembly, acetyl-CoA carboxylase is a heterohexamer composed of biotin carboxyl carrier protein (AccB), biotin carboxylase (AccC) and two subunits each of ACCase subunit alpha (AccA) and ACCase subunit beta (AccD). The cofactor is Zn(2+).

The protein localises to the cytoplasm. The catalysed reaction is N(6)-carboxybiotinyl-L-lysyl-[protein] + acetyl-CoA = N(6)-biotinyl-L-lysyl-[protein] + malonyl-CoA. It participates in lipid metabolism; malonyl-CoA biosynthesis; malonyl-CoA from acetyl-CoA: step 1/1. Functionally, component of the acetyl coenzyme A carboxylase (ACC) complex. Biotin carboxylase (BC) catalyzes the carboxylation of biotin on its carrier protein (BCCP) and then the CO(2) group is transferred by the transcarboxylase to acetyl-CoA to form malonyl-CoA. This Prochlorococcus marinus (strain MIT 9215) protein is Acetyl-coenzyme A carboxylase carboxyl transferase subunit beta.